The primary structure comprises 72 residues: MSLEILDQLEEKIKQAVETIQLLQLEIDELKEKNNQSQQANDALRSENEQLKSEHQNWQERLRSLLGKIDNV.

The stretch at 1–72 (MSLEILDQLE…RSLLGKIDNV (72 aa)) forms a coiled coil. The disordered stretch occupies residues 33-57 (KNNQSQQANDALRSENEQLKSEHQN). The segment covering 44–57 (LRSENEQLKSEHQN) has biased composition (basic and acidic residues).

The protein belongs to the ZapB family. In terms of assembly, homodimer. The ends of the coiled-coil dimer bind to each other, forming polymers. Interacts with FtsZ.

The protein resides in the cytoplasm. Functionally, non-essential, abundant cell division factor that is required for proper Z-ring formation. It is recruited early to the divisome by direct interaction with FtsZ, stimulating Z-ring assembly and thereby promoting cell division earlier in the cell cycle. Its recruitment to the Z-ring requires functional FtsA or ZipA. The chain is Cell division protein ZapB from Pasteurella multocida (strain Pm70).